The chain runs to 178 residues: Ribosome maturation factor RimM (178 aa).

A PRC barrel domain is found at 100-178 (AADEYYWYQL…VMRVEWDADF (79 aa)).

The protein belongs to the RimM family. As to quaternary structure, binds ribosomal protein uS19.

The protein localises to the cytoplasm. Functionally, an accessory protein needed during the final step in the assembly of 30S ribosomal subunit, possibly for assembly of the head region. Essential for efficient processing of 16S rRNA. May be needed both before and after RbfA during the maturation of 16S rRNA. It has affinity for free ribosomal 30S subunits but not for 70S ribosomes. This Pseudomonas putida (strain W619) protein is Ribosome maturation factor RimM.